The chain runs to 368 residues: Ribosomal RNA large subunit methyltransferase M (368 aa).

S-adenosyl-L-methionine contacts are provided by residues serine 199, 232-235 (APGG), aspartate 251, aspartate 271, and aspartate 287. The active-site Proton acceptor is the lysine 316.

This sequence belongs to the class I-like SAM-binding methyltransferase superfamily. RNA methyltransferase RlmE family. RlmM subfamily. Monomer.

The protein resides in the cytoplasm. It carries out the reaction cytidine(2498) in 23S rRNA + S-adenosyl-L-methionine = 2'-O-methylcytidine(2498) in 23S rRNA + S-adenosyl-L-homocysteine + H(+). In terms of biological role, catalyzes the 2'-O-methylation at nucleotide C2498 in 23S rRNA. In Aromatoleum aromaticum (strain DSM 19018 / LMG 30748 / EbN1) (Azoarcus sp. (strain EbN1)), this protein is Ribosomal RNA large subunit methyltransferase M.